Here is a 511-residue protein sequence, read N- to C-terminus: MKISLKCLNTHTAEIYRKCLLLSDSTVNVSSVDFTNQSKLNLLKQEKKSIESFNKNSLLNISNFRDLERQEKDIQKKTSKKVYKKSYSRSTKSIYSRTKIINERNKLHTLNQQIIFSTLARIHLKKKINLLFPVQEFLFELSKHRNKSAGSKSREYLEILLCVKKLKMFYGFIPLKQLHKILVQAKAMPGYFSKNFFSLIEKRLDVVLYRSGFTKTIVAARQACRHSQIYVNSKVCRIPSTILESGDIISYKNQLDSLKTAEIKNNLFSNINTNVSGNEVSNNVSNKVSNKISSTLALNKQSLLLLLFCAKSIYNESFFVSNKRKFKSNEVTFDNKKEITSAIDYTKYLQIKNSRKKYKLITLNNNLDSLSFNIFDKEILNSLSSKQNLPVNKQNIVEIENKKTNKFNTFSLLFQNLTSFSKSIESYSSVLALKLQDHLLNIKGKRNEVSKNINKIERSQKDNVFINILQKINRPTHLEISSITNSIIFLYSPQRIYLPFYVDIDILRKSL.

Residues 202–272 (KRLDVVLYRS…IKNNLFSNIN (71 aa)) enclose the S4 RNA-binding domain.

This sequence belongs to the universal ribosomal protein uS4 family.

The protein resides in the mitochondrion. The protein is Small ribosomal subunit protein uS4m (RPS4) of Prototheca wickerhamii.